The sequence spans 130 residues: ATP synthase epsilon chain (130 aa).

The protein belongs to the ATPase epsilon chain family. F-type ATPases have 2 components, CF(1) - the catalytic core - and CF(0) - the membrane proton channel. CF(1) has five subunits: alpha(3), beta(3), gamma(1), delta(1), epsilon(1). CF(0) has three main subunits: a, b and c.

Its subcellular location is the cell inner membrane. Its function is as follows. Produces ATP from ADP in the presence of a proton gradient across the membrane. The chain is ATP synthase epsilon chain from Sulfurimonas denitrificans (strain ATCC 33889 / DSM 1251) (Thiomicrospira denitrificans (strain ATCC 33889 / DSM 1251)).